Here is a 249-residue protein sequence, read N- to C-terminus: ATP synthase subunits region ORF 6 (249 aa).

The chain is ATP synthase subunits region ORF 6 from Fuscovulum blasticum (Rhodobacter blasticus).